We begin with the raw amino-acid sequence, 265 residues long: uncharacterized protein (265 aa).

Disordered stretches follow at residues 62–94 (RNKK…ALGK) and 118–149 (MVPG…RPNP). Residues 126–139 (DGPKKSDTDIKDAV) are compositionally biased toward basic and acidic residues.

This is an uncharacterized protein from Homo sapiens (Human).